A 444-amino-acid chain; its full sequence is IMP-specific 5'-nucleotidase 1 (444 aa).

The ATP site is built by Lys-132 and His-150. Asp-170 (nucleophile) is an active-site residue. Asp-170, Asp-172, Asp-178, Thr-204, Ser-207, Ser-308, Asp-363, and Lys-371 together coordinate IMP. 2 residues coordinate Mg(2+): Asp-170 and Asp-172. The Proton donor role is filled by Asp-172. Residue Asp-394 participates in Mg(2+) binding.

It belongs to the ISN1 family. As to quaternary structure, homotetramer. Requires Mg(2+) as cofactor.

It is found in the cytoplasm. It catalyses the reaction IMP + H2O = inosine + phosphate. At physiological pH, allosterically activated by ATP. ATP binding is a prerequisite to magnesium and substrate binding. ATP binds to 2 of the subunits in the homotetramer inducing a closure of these 2 subunits and the release of the C-terminal loop, thereby activating the enzyme. In this conformation, the enzyme can bind IMP and magnesium which ultimately leads to the release of ATP. At pH 5, ATP does not have an allosteric role and is dispensable for magnesium and substrate binding. Inhibited by phosphocholine and D-myo-inositol-4-phosphate. Functionally, specifically, catalyzes the dephosphorylation of inosine monophosphate (IMP) into inosine. By dephosphorylating IMP, plays a role in the purine salvage pathway. Does not have phosphotransferase activity with IMP as phosphate donor and adenosine as phosphate acceptor. The protein is IMP-specific 5'-nucleotidase 1 of Plasmodium falciparum (isolate 3D7).